The sequence spans 96 residues: Large ribosomal subunit protein uL23 (96 aa).

It belongs to the universal ribosomal protein uL23 family. Part of the 50S ribosomal subunit. Contacts protein L29, and trigger factor when it is bound to the ribosome.

One of the early assembly proteins it binds 23S rRNA. One of the proteins that surrounds the polypeptide exit tunnel on the outside of the ribosome. Forms the main docking site for trigger factor binding to the ribosome. The chain is Large ribosomal subunit protein uL23 from Maridesulfovibrio salexigens (strain ATCC 14822 / DSM 2638 / NCIMB 8403 / VKM B-1763) (Desulfovibrio salexigens).